Here is an 883-residue protein sequence, read N- to C-terminus: Aryl hydrocarbon receptor (883 aa).

Residues 1 to 9 (MSSGANITY) constitute a propeptide that is removed on maturation. The interval 1 to 38 (MSSGANITYASRKRRKPVQKTVKPIPAEGIKSNPSKRH) is disordered. Short sequence motifs (nuclear localization signal) lie at residues 12-15 (RKRR) and 36-41 (KRHRDR). The 54-residue stretch at 26 to 79 (PAEGIKSNPSKRHRDRLNTELDRLASLLPFPQDVINKLDKLSVLRLSVSYLRAK) folds into the bHLH domain. The tract at residues 37–65 (RHRDRLNTELDRLASLLPFPQDVINKLDK) is DNA-binding. Required for maintaining the overall integrity of the AHR:ARNT heterodimer and its transcriptional activity stretches follow at residues 49–81 (LASL…AKSF), 116–124 (LLQALNGFV), and 260–262 (FAI). The Nuclear export signal motif lies at 63 to 71 (LDKLSVLRL). Positions 111–175 (QEGEFLLQAL…AEFQRQLHWA (65 aa)) constitute a PAS 1 domain. The PAS 2 domain maps to 266-336 (LQPPSILEIR…CAESHIRMIK (71 aa)). Residues 342-383 (MTVFRLLAKHSRWRWVQSNARLIYRNGRPDYIIATQRPLTDE) enclose the PAC domain. Residues 421 to 449 (LPIRTKSNTSRKDWAPQSTPSKDSFHPSS) form a disordered region. Polar residues predominate over residues 436–449 (PQSTPSKDSFHPSS).

As to quaternary structure, homodimer. Heterodimer; efficient DNA binding requires dimerization with another bHLH protein. Interacts with ARNT; the heterodimer ARNT:AHR binds to core DNA sequence 5'-TGCGTG-3' within the dioxin response element (DRE) of target gene promoters and activates their transcription. Binds MYBBP1A. Interacts with coactivators including SRC-1, RIP140 and NOCA7, and with the corepressor SMRT. Interacts with NEDD8 and IVNS1ABP. Interacts with BMAL1. Interacts with HSP90AB1. Interacts with TIPARP; leading to mono-ADP-ribosylation of AHR and subsequent inhibition of AHR. Post-translationally, mono-ADP-ribosylated, leading to inhibit transcription activator activity of AHR.

Its subcellular location is the cytoplasm. It is found in the nucleus. Ligand-activated transcription factor that enables cells to adapt to changing conditions by sensing compounds from the environment, diet, microbiome and cellular metabolism, and which plays important roles in development, immunity and cancer. Upon ligand binding, translocates into the nucleus, where it heterodimerizes with ARNT and induces transcription by binding to xenobiotic response elements (XRE). Regulates a variety of biological processes, including angiogenesis, hematopoiesis, drug and lipid metabolism, cell motility and immune modulation. Xenobiotics can act as ligands: upon xenobiotic-binding, activates the expression of multiple phase I and II xenobiotic chemical metabolizing enzyme genes (such as the CYP1A1 gene). Mediates biochemical and toxic effects of halogenated aromatic hydrocarbons. Next to xenobiotics, natural ligands derived from plants, microbiota, and endogenous metabolism are potent AHR agonists. Tryptophan (Trp) derivatives constitute an important class of endogenous AHR ligands. Acts as a negative regulator of anti-tumor immunity: indoles and kynurenic acid generated by Trp catabolism act as ligand and activate AHR, thereby promoting AHR-driven cancer cell motility and suppressing adaptive immunity. Regulates the circadian clock by inhibiting the basal and circadian expression of the core circadian component PER1. Inhibits PER1 by repressing the CLOCK-BMAL1 heterodimer mediated transcriptional activation of PER1. The heterodimer ARNT:AHR binds to core DNA sequence 5'-TGCGTG-3' within the dioxin response element (DRE) of target gene promoters and activates their transcription. This chain is Aryl hydrocarbon receptor (Ahr), found in Mus musculus molossinus (Japanese house mouse).